Here is a 106-residue protein sequence, read N- to C-terminus: Large ribosomal subunit protein eL42 (106 aa).

This sequence belongs to the eukaryotic ribosomal protein eL42 family.

The polypeptide is Large ribosomal subunit protein eL42 (RPL44) (Kluyveromyces lactis (strain ATCC 8585 / CBS 2359 / DSM 70799 / NBRC 1267 / NRRL Y-1140 / WM37) (Yeast)).